Consider the following 159-residue polypeptide: S-ribosylhomocysteine lyase 1 (159 aa).

Residues histidine 54, histidine 58, and cysteine 124 each coordinate Fe cation.

This sequence belongs to the LuxS family. Homodimer. Fe cation serves as cofactor.

It catalyses the reaction S-(5-deoxy-D-ribos-5-yl)-L-homocysteine = (S)-4,5-dihydroxypentane-2,3-dione + L-homocysteine. In terms of biological role, involved in the synthesis of autoinducer 2 (AI-2) which is secreted by bacteria and is used to communicate both the cell density and the metabolic potential of the environment. The regulation of gene expression in response to changes in cell density is called quorum sensing. Catalyzes the transformation of S-ribosylhomocysteine (RHC) to homocysteine (HC) and 4,5-dihydroxy-2,3-pentadione (DPD). This is S-ribosylhomocysteine lyase 1 from Lactobacillus delbrueckii subsp. bulgaricus (strain ATCC BAA-365 / Lb-18).